A 167-amino-acid polypeptide reads, in one-letter code: Putative peroxiredoxin-B (167 aa).

A Thioredoxin domain is found at Ile-4–Leu-167. Catalysis depends on Cys-53, which acts as the Cysteine sulfenic acid (-SOH) intermediate. The Microbody targeting signal signature appears at Ala-165–Leu-167.

It belongs to the peroxiredoxin family. Prx5 subfamily.

Its subcellular location is the peroxisome membrane. It catalyses the reaction a hydroperoxide + [thioredoxin]-dithiol = an alcohol + [thioredoxin]-disulfide + H2O. Thiol-specific peroxidase that catalyzes the reduction of hydrogen peroxide and organic hydroperoxides to water and alcohols, respectively. Plays a role in cell protection against oxidative stress by detoxifying peroxides and as sensor of hydrogen peroxide-mediated signaling events. In Candida boidinii (Yeast), this protein is Putative peroxiredoxin-B (PMPB).